A 391-amino-acid chain; its full sequence is NADH-quinone oxidoreductase subunit D (391 aa).

This sequence belongs to the complex I 49 kDa subunit family. In terms of assembly, NDH-1 is composed of 14 different subunits. Subunits NuoB, C, D, E, F, and G constitute the peripheral sector of the complex.

It is found in the cell inner membrane. The catalysed reaction is a quinone + NADH + 5 H(+)(in) = a quinol + NAD(+) + 4 H(+)(out). NDH-1 shuttles electrons from NADH, via FMN and iron-sulfur (Fe-S) centers, to quinones in the respiratory chain. The immediate electron acceptor for the enzyme in this species is believed to be ubiquinone. Couples the redox reaction to proton translocation (for every two electrons transferred, four hydrogen ions are translocated across the cytoplasmic membrane), and thus conserves the redox energy in a proton gradient. In Rickettsia felis (strain ATCC VR-1525 / URRWXCal2) (Rickettsia azadi), this protein is NADH-quinone oxidoreductase subunit D.